The primary structure comprises 471 residues: 3-isopropylmalate dehydratase large subunit (471 aa).

Residues cysteine 347, cysteine 407, and cysteine 410 each contribute to the [4Fe-4S] cluster site.

It belongs to the aconitase/IPM isomerase family. LeuC type 1 subfamily. In terms of assembly, heterodimer of LeuC and LeuD. Requires [4Fe-4S] cluster as cofactor.

It catalyses the reaction (2R,3S)-3-isopropylmalate = (2S)-2-isopropylmalate. It participates in amino-acid biosynthesis; L-leucine biosynthesis; L-leucine from 3-methyl-2-oxobutanoate: step 2/4. In terms of biological role, catalyzes the isomerization between 2-isopropylmalate and 3-isopropylmalate, via the formation of 2-isopropylmaleate. The protein is 3-isopropylmalate dehydratase large subunit of Buchnera aphidicola subsp. Baizongia pistaciae (strain Bp).